The chain runs to 973 residues: Sensor histidine kinase TmoS (973 aa).

Residues 32-103 (REELARIIFD…NQKRLVEAAS (72 aa)) form the PAS 1 domain. The PAC 1 domain maps to 108 to 162 (VRCDIEILGKSGGREVIAVDFSLLPIRDEQENIVFLLAEGRNITDKKKAEAMLAL). Positions 187–405 (KVSHELRTPL…LFQVKLPLNA (219 aa)) constitute a Histidine kinase 1 domain. At His190 the chain carries Phosphohistidine; by autocatalysis. Residues 452–567 (RVLIVEDNPD…ELRARVSNLI (116 aa)) form the Response regulatory domain. 4-aspartylphosphate is present on Asp500. Positions 611–681 (SEARWKAVYE…QRLARLLQSG (71 aa)) constitute a PAS 2 domain. The 53-residue stretch at 685–737 (YSVECSYLCKNGSTIWANASVSLMSPRVDEPQVILQIIDDITEKKQAQETLNQ) folds into the PAC 2 domain. The 217-residue stretch at 757–973 (YIAHEINQPL…ACFFVSIPVS (217 aa)) folds into the Histidine kinase 2 domain. Residue His760 is modified to Phosphohistidine.

In terms of processing, autophosphorylated. Activation requires a sequential transfer of a phosphate group from a His in the primary transmitter domain, to an Asp in the receiver domain and to a His in the secondary transmitter domain.

It is found in the cytoplasm. The catalysed reaction is ATP + protein L-histidine = ADP + protein N-phospho-L-histidine.. With respect to regulation, activity is regulated by agonists and antagonists. Binding of agonists such as toluene or benzene to TmoS stimulates autophosphorylation. Toluene causes the most pronounced increase, followed by benzene, chlorobenzene and ethylbenzene. Activity is inhibited by antagonists such as o-xylene, o-chlorotoluene and trimethylbenzene isomers, which bind to TmoS but do not stimulate autophosphorylation. In terms of biological role, member of the two-component regulatory system TmoS/TmoT involved in the regulation of toluene degradation. Probably phosphorylates TmoT via a four-step phosphorelay in response to toluene. Can also be induced by benzene and ethylbenzene. This is Sensor histidine kinase TmoS (tmoS) from Ectopseudomonas mendocina (Pseudomonas mendocina).